A 148-amino-acid chain; its full sequence is IQ domain-containing protein F5 (148 aa).

IQ domains are found at residues 11–40 (ERSA…RAWI) and 67–96 (QEWA…AVRI).

In Homo sapiens (Human), this protein is IQ domain-containing protein F5 (IQCF5).